Reading from the N-terminus, the 368-residue chain is GTPase Obg (368 aa).

One can recognise an Obg domain in the interval 1 to 159 (MQFIDQAEIE…RQLRLELKLL (159 aa)). Residues 160 to 328 (AEVGIIGLPN…LMQLVWQWLD (169 aa)) enclose the OBG-type G domain. GTP is bound by residues 166–173 (GLPNAGKS), 191–195 (FTTLV), 213–216 (DIPG), 280–283 (NKID), and 309–311 (SAA). Mg(2+) is bound by residues serine 173 and threonine 193.

It belongs to the TRAFAC class OBG-HflX-like GTPase superfamily. OBG GTPase family. As to quaternary structure, monomer. The cofactor is Mg(2+).

Its subcellular location is the cytoplasm. Its function is as follows. An essential GTPase which binds GTP, GDP and possibly (p)ppGpp with moderate affinity, with high nucleotide exchange rates and a fairly low GTP hydrolysis rate. Plays a role in control of the cell cycle, stress response, ribosome biogenesis and in those bacteria that undergo differentiation, in morphogenesis control. This is GTPase Obg from Synechocystis sp. (strain ATCC 27184 / PCC 6803 / Kazusa).